Consider the following 208-residue polypeptide: Small ribosomal subunit protein uS4 (208 aa).

The segment at 31–51 (SALDKRAYGPGQHGQRRAKTS) is disordered. One can recognise an S4 RNA-binding domain in the interval 98-156 (RRLDNVVYRMGFATTRSSARQLVTHGHVLVDGKRLDIPSYFVRSGQKIEIKEKTKSNPQ).

Belongs to the universal ribosomal protein uS4 family. As to quaternary structure, part of the 30S ribosomal subunit. Contacts protein S5. The interaction surface between S4 and S5 is involved in control of translational fidelity.

Functionally, one of the primary rRNA binding proteins, it binds directly to 16S rRNA where it nucleates assembly of the body of the 30S subunit. In terms of biological role, with S5 and S12 plays an important role in translational accuracy. The protein is Small ribosomal subunit protein uS4 of Helicobacter pylori (strain HPAG1).